A 168-amino-acid polypeptide reads, in one-letter code: Photosystem I assembly protein Ycf3 (168 aa).

3 TPR repeats span residues 35–68 (AFTYYRDGMSAQSEGNYAEALQNYYEAMRLEIDP), 72–105 (SYILYNIGLIHTSNGEHMKALEYYFRALERNPFL), and 120–153 (GEKAIQQGDSEIAEAWFDQAAEYWKQALALTPGN).

The protein belongs to the Ycf3 family.

It localises to the plastid membrane. Functionally, essential for the assembly of the photosystem I (PSI) complex. May act as a chaperone-like factor to guide the assembly of the PSI subunits. This chain is Photosystem I assembly protein Ycf3, found in Cuscuta exaltata (Tall dodder).